The sequence spans 246 residues: Isoamyl acetate-hydrolyzing esterase (246 aa).

The active-site Nucleophile is the S46. The active-site Proton donor is the D201. H204 functions as the Proton acceptor in the catalytic mechanism.

This sequence belongs to the 'GDSL' lipolytic enzyme family. IAH1 subfamily.

The protein localises to the cytoplasm. It catalyses the reaction 3-methylbutyl acetate + H2O = 3-methylbutanol + acetate + H(+). In Schizosaccharomyces pombe (strain 972 / ATCC 24843) (Fission yeast), this protein is Isoamyl acetate-hydrolyzing esterase (iah1).